An 890-amino-acid chain; its full sequence is Alanine--tRNA ligase (890 aa).

Zn(2+)-binding residues include His-568, His-572, Cys-680, and His-684.

The protein belongs to the class-II aminoacyl-tRNA synthetase family. Zn(2+) serves as cofactor.

Its subcellular location is the cytoplasm. The catalysed reaction is tRNA(Ala) + L-alanine + ATP = L-alanyl-tRNA(Ala) + AMP + diphosphate. In terms of biological role, catalyzes the attachment of alanine to tRNA(Ala) in a two-step reaction: alanine is first activated by ATP to form Ala-AMP and then transferred to the acceptor end of tRNA(Ala). Also edits incorrectly charged Ser-tRNA(Ala) and Gly-tRNA(Ala) via its editing domain. The sequence is that of Alanine--tRNA ligase from Psychrobacter cryohalolentis (strain ATCC BAA-1226 / DSM 17306 / VKM B-2378 / K5).